A 103-amino-acid chain; its full sequence is NADH dehydrogenase [ubiquinone] 1 beta subcomplex subunit 7 (103 aa).

The 43-residue stretch at 27–69 (RDMCAHLLIPLNKCRQAEFYLPWKCEDERHVYEKCEYELVMER) folds into the CHCH domain. 2 consecutive short sequence motifs (cx9C motif) follow at residues 30–40 (CAHLLIPLNKC) and 51–61 (CEDERHVYEKC). Cystine bridges form between C30–C61 and C40–C51.

It belongs to the complex I NDUFB7 subunit family. As to quaternary structure, complex I is composed of at least 49 different subunits.

The protein localises to the mitochondrion. Its subcellular location is the mitochondrion inner membrane. The protein resides in the mitochondrion intermembrane space. Its function is as follows. Accessory subunit of the mitochondrial membrane respiratory chain NADH dehydrogenase (Complex I), that is believed not to be involved in catalysis. Complex I functions in the transfer of electrons from NADH to the respiratory chain. The immediate electron acceptor for the enzyme is believed to be ubiquinone. This chain is NADH dehydrogenase [ubiquinone] 1 beta subcomplex subunit 7, found in Arabidopsis thaliana (Mouse-ear cress).